Reading from the N-terminus, the 304-residue chain is bZIP transcription factor 50 (304 aa).

Topologically, residues 1 to 222 (MDVEFFADLD…MQESAVLTET (222 aa)) are cytoplasmic. 2 disordered regions span residues 26-60 (GSGVSGLFAPSPPHDAEAGSPESVSSRRPSPSREA) and 94-163 (GEEE…ERKK). Residues 45–59 (SPESVSSRRPSPSRE) are compositionally biased toward low complexity. Positions 127–139 (EKEDVEAEVDGDD) are enriched in acidic residues. The bZIP domain occupies 141–203 (MSKKKRRQMR…NMALRQSLLK (63 aa)). Positions 143–167 (KKKRRQMRNRDSAMKSRERKKMYVK) are basic motif. Residues 150–163 (RNRDSAMKSRERKK) are compositionally biased toward basic and acidic residues. Residues 169-183 (LETKSKYLEAECRRL) are leucine-zipper. The helical transmembrane segment at 223 to 243 (LPLVSLLWLVSIVCLLPVPGL) threads the bilayer. At 244–304 (PNRNPVARSS…GPFRLAAAAC (61 aa)) the chain is on the lumenal side.

It belongs to the bZIP family.

It is found in the endoplasmic reticulum membrane. Its subcellular location is the nucleus. Transcriptionally activated by IRE1 in response to endoplasmic reticulum (ER) stress. IRE1 cleaves a 20-bp fragment causing a frameshift of the mRNA transcript, leading to a nuclear isoform of the BZIP50 activator. Transcription factor involved in endoplasmic reticulum (ER) stress response. Acts downstream of the ER stress sensors IRE1, BZIP39 and BZIP60 to activate BiP chaperone genes. The protein is bZIP transcription factor 50 of Oryza sativa subsp. japonica (Rice).